The chain runs to 313 residues: Tyrosine recombinase XerD (313 aa).

The Core-binding (CB) domain maps to 17–102 (EDNDVIIEQF…TLRRFFQYLY (86 aa)). One can recognise a Tyr recombinase domain in the interval 123–307 (RLPKDLSEQQ…ATERLKVLHQ (185 aa)). Catalysis depends on residues Arg163, Lys187, His259, Arg262, and His285. The O-(3'-phospho-DNA)-tyrosine intermediate role is filled by Tyr294.

This sequence belongs to the 'phage' integrase family. XerD subfamily. Forms a cyclic heterotetrameric complex composed of two molecules of XerC and two molecules of XerD, in which XerC interacts with XerD via its C-terminal region, XerD interacts with XerC via its C-terminal region and so on.

Its subcellular location is the cytoplasm. FtsK may regulate the catalytic switch between XerC and XerD in the heterotetrameric complex during the two steps of the recombination process. Its function is as follows. Site-specific tyrosine recombinase, which acts by catalyzing the cutting and rejoining of the recombining DNA molecules. Binds cooperatively to specific DNA consensus sequences that are separated from XerC binding sites by a short central region, forming the heterotetrameric XerC-XerD complex that recombines DNA substrates. The complex is essential to convert dimers of the bacterial chromosome into monomers to permit their segregation at cell division. It also contributes to the segregational stability of plasmids. In the complex XerD specifically exchanges the bottom DNA strands. The chain is Tyrosine recombinase XerD from Proteus mirabilis.